The sequence spans 534 residues: MRLLTTVAALRCYLNKRRWESRLTASEEQILDSMTSWYQTAIGLVPTMGSLHQGHLSLIERARHENSTVIVSIFINPLQFGPNEDYGRYPRTLEQDRQLCEQGGVDAIFAPSPEELGIPQKNIQESQVTQVIPPSVMISGLCGHSRLGHFQGVATIVTKLLNLVQPDRAYFGQKDGQQLAVIKRLVADLDLPVEIVACPTVREASGLACSSRNQYLTAQEKQQAAVLYRGLLQAEAAFKAGVRYSSRLREVVRQELAKVSSVLVEYIELVEPTTLMPLDKIQEEGMLAIAARLGSTRLIDNTILRDRQPIIAIDGPAGAGKSTVARQVATKLGLVYLDTGAMYRAVTWLVLQQGIAIDDDCAIAELASKCKIELTPSQDLQSPVRVWINDTDVTQNIRTIEVTSQVSAIAAQAAVRQALVKQQQRWGKRGGLVAEGRDIGTHVFPDAEVKIFLTASVGERARRRQQDFQKQGQPEVSLEQLEKDIAERDWKDSTRKVSPLQKAADAVELQTDGLSISDVASQIVDYYQQRLSQW.

Residues 1 to 302 are pantoate--beta-alanine ligase; it reads MRLLTTVAAL…LGSTRLIDNT (302 aa). 48–55 contacts ATP; the sequence is MGSLHQGH. His55 (proton donor) is an active-site residue. (R)-pantoate is bound at residue Gln79. Residue Gln79 coordinates beta-alanine. An ATP-binding site is contributed by 172–175; it reads GQKD. Gln178 contributes to the (R)-pantoate binding site. ATP contacts are provided by residues Val201 and 209 to 212; that span reads CSSR. A cytidylate kinase region spans residues 303-534; sequence ILRDRQPIIA…DYYQQRLSQW (232 aa).

This sequence in the N-terminal section; belongs to the pantothenate synthetase family. It in the C-terminal section; belongs to the cytidylate kinase family. Type 1 subfamily.

The protein resides in the cytoplasm. It catalyses the reaction (R)-pantoate + beta-alanine + ATP = (R)-pantothenate + AMP + diphosphate + H(+). The enzyme catalyses CMP + ATP = CDP + ADP. The catalysed reaction is dCMP + ATP = dCDP + ADP. The protein operates within cofactor biosynthesis; (R)-pantothenate biosynthesis; (R)-pantothenate from (R)-pantoate and beta-alanine: step 1/1. Functionally, catalyzes the condensation of pantoate with beta-alanine in an ATP-dependent reaction via a pantoyl-adenylate intermediate. In terms of biological role, catalyzes the transfer of a phosphate group from ATP to either CMP or dCMP to form CDP or dCDP and ADP, respectively. The chain is Bifunctional pantoate ligase/cytidylate kinase from Nostoc sp. (strain PCC 7120 / SAG 25.82 / UTEX 2576).